Consider the following 363-residue polypeptide: Peptide chain release factor 1 (363 aa).

N5-methylglutamine is present on Gln237.

This sequence belongs to the prokaryotic/mitochondrial release factor family. In terms of processing, methylated by PrmC. Methylation increases the termination efficiency of RF1.

Its subcellular location is the cytoplasm. Functionally, peptide chain release factor 1 directs the termination of translation in response to the peptide chain termination codons UAG and UAA. This chain is Peptide chain release factor 1, found in Marinobacter nauticus (strain ATCC 700491 / DSM 11845 / VT8) (Marinobacter aquaeolei).